A 573-amino-acid chain; its full sequence is (R)-mandelonitrile lyase 3 (573 aa).

A signal peptide spans 1–27 (MVKSTMSAVLLVLHIFVLHLQYSEVQS). Residue asparagine 30 is glycosylated (N-linked (GlcNAc...) asparagine). An FAD-binding site is contributed by 63 to 64 (TA). A glycan (N-linked (GlcNAc...) asparagine) is linked at asparagine 75. Residues 82-83 (ER), valine 129, threonine 133, and 137-140 (NAGV) each bind FAD. N-linked (GlcNAc...) asparagine glycans are attached at residues asparagine 145, asparagine 150, asparagine 162, and asparagine 218. Valine 244 contacts FAD. 3 N-linked (GlcNAc...) asparagine glycosylation sites follow: asparagine 252, asparagine 267, and asparagine 309. Cysteine 356 is a substrate binding site. 4 N-linked (GlcNAc...) asparagine glycosylation sites follow: asparagine 380, asparagine 402, asparagine 420, and asparagine 467. Cysteines 427 and 478 form a disulfide. Substrate is bound at residue tyrosine 485. Residues 486-487 (WH) and glycine 515 contribute to the FAD site. Histidine 487 functions as the Proton donor in the catalytic mechanism. Residue histidine 525 is the Proton acceptor of the active site. 526 to 527 (PQ) contributes to the FAD binding site.

Belongs to the GMC oxidoreductase family. As to quaternary structure, monomer. FAD is required as a cofactor.

The protein localises to the vacuole. The protein resides in the aleurone grain. It catalyses the reaction (R)-mandelonitrile = benzaldehyde + hydrogen cyanide. Functionally, involved in cyanogenesis, the release of HCN from injured tissues. Catalyzes the stereospecific addition of HCN to a variety of aldehydes in vitro. It is a major seed constituent, and could have the additional role of a storage form for reduced nitrogen. The chain is (R)-mandelonitrile lyase 3 (MDL3) from Prunus serotina (Black cherry).